The primary structure comprises 207 residues: dITP/XTP pyrophosphatase (207 aa).

T8–K13 provides a ligand contact to substrate. D72 (proton acceptor) is an active-site residue. D72 is a binding site for Mg(2+). Substrate-binding positions include S73, F157–D160, K180, and H185–R186.

Belongs to the HAM1 NTPase family. As to quaternary structure, homodimer. Requires Mg(2+) as cofactor.

It carries out the reaction XTP + H2O = XMP + diphosphate + H(+). It catalyses the reaction dITP + H2O = dIMP + diphosphate + H(+). The enzyme catalyses ITP + H2O = IMP + diphosphate + H(+). In terms of biological role, pyrophosphatase that catalyzes the hydrolysis of nucleoside triphosphates to their monophosphate derivatives, with a high preference for the non-canonical purine nucleotides XTP (xanthosine triphosphate), dITP (deoxyinosine triphosphate) and ITP. Seems to function as a house-cleaning enzyme that removes non-canonical purine nucleotides from the nucleotide pool, thus preventing their incorporation into DNA/RNA and avoiding chromosomal lesions. This is dITP/XTP pyrophosphatase from Lactobacillus johnsonii (strain CNCM I-12250 / La1 / NCC 533).